Consider the following 147-residue polypeptide: Large ribosomal subunit protein uL13 (147 aa).

It belongs to the universal ribosomal protein uL13 family. As to quaternary structure, part of the 50S ribosomal subunit.

Its function is as follows. This protein is one of the early assembly proteins of the 50S ribosomal subunit, although it is not seen to bind rRNA by itself. It is important during the early stages of 50S assembly. In Frankia casuarinae (strain DSM 45818 / CECT 9043 / HFP020203 / CcI3), this protein is Large ribosomal subunit protein uL13.